Consider the following 575-residue polypeptide: FAD-linked oxidoreductase asqF (575 aa).

The first 23 residues, 1–23, serve as a signal peptide directing secretion; the sequence is MALFRLSAAIVVIFLYIWSPSQR. N-linked (GlcNAc...) asparagine glycosylation is found at asparagine 45 and asparagine 80. Residues 118–306 enclose the FAD-binding PCMH-type domain; it reads NQGRIPLYAA…VRVTMRTYPD (189 aa). Histidine 156 is subject to Pros-8alpha-FAD histidine. A glycan (N-linked (GlcNAc...) asparagine) is linked at asparagine 370.

The protein belongs to the oxygen-dependent FAD-linked oxidoreductase family. It depends on FAD as a cofactor.

It catalyses the reaction peniprequinolone + A = yaequinolone E + AH2. Its pathway is secondary metabolite biosynthesis. The protein operates within alkaloid biosynthesis. It participates in mycotoxin biosynthesis. In terms of biological role, FAD-linked oxidoreductase; part of the gene cluster that mediates the biosynthesis of the aspoquinolone mycotoxins. Within the pathway, asqF performs FAD-dependent dehydrogenation of the dimethylallyl quinolone peniprequinolone to yield the conjugated aryl diene yaequinolone E. The first step of the pathway is catalyzed by the nonribosomal peptide synthetase asqK that condenses anthranilic acid and O-methyl-L-tyrosine to produce 4'-methoxycyclopeptin. 4'-methoxycyclopeptin is then converted to 4'-methoxydehydrocyclopeptin by the ketoglutarate-dependent dioxygenase asqJ. AsqJ also converts its first product 4'-methoxydehydrocyclopeptin to 4'-methoxycyclopenin. The following conversion of 4'-methoxycyclopenin into 4'-methoxyviridicatin is catalyzed by the cyclopenase asqI. 4'-methoxyviridicatin is the precursor of quinolone natural products, and is further converted to quinolinone B. The prenyltransferase asqH1 then catalyzes the canonical Friedel-Crafts alkylation of quinolinone B with dimethylallyl cation to yield dimethylallyl quinolone, which is subjected to FAD-dependent dehydrogenation by the FAD-linked oxidoreductase asqF to yield conjugated aryl diene. The delta(3') double bond then serves as the site of the second alkylation with DMAPP catalyzed by the prenyltransferase asqH2 to yield a carbenium ion intermediate, which can be attacked by H(2)O to yield a styrenyl quinolone containing a C3'-hydroxyprenyl chain. The FAD-dependent monooxygenase asqG performs epoxidation of the terminal C7'-C8' olefin. Finally, after dehydratation of the epoxide at C3 by asqC, the quinolone epoxide rearrangement protein asqO catalyzes an enzymatic 3-exo-tet cyclization to yield the cyclopropyl-THF ring system in aspoquinolone. This is FAD-linked oxidoreductase asqF from Emericella nidulans (strain FGSC A4 / ATCC 38163 / CBS 112.46 / NRRL 194 / M139) (Aspergillus nidulans).